The sequence spans 344 residues: L-rhamnose-proton symporter (344 aa).

10 consecutive transmembrane segments (helical) span residues 4–24 (AITM…CFYA), 38–58 (WSVG…ALLL), 68–88 (FSLS…IGNI), 101–121 (MGIG…TPII), 137–157 (TLLG…AGQL), 175–195 (LVLA…MNAA), 214–234 (LPSY…FCFI), 259–279 (VLLS…YAWG), 290–310 (ISWM…GLVL), and 323–343 (VLSL…IGMA).

Belongs to the L-rhamnose transporter (TC 2.A.7.6) family.

The protein localises to the cell inner membrane. It catalyses the reaction L-rhamnopyranose(in) + H(+)(in) = L-rhamnopyranose(out) + H(+)(out). In terms of biological role, uptake of L-rhamnose across the cytoplasmic membrane with the concomitant transport of protons into the cell (symport system). The protein is L-rhamnose-proton symporter of Escherichia coli O127:H6 (strain E2348/69 / EPEC).